Reading from the N-terminus, the 96-residue chain is Aspartyl/glutamyl-tRNA(Asn/Gln) amidotransferase subunit C (96 aa).

Belongs to the GatC family. As to quaternary structure, heterotrimer of A, B and C subunits.

It carries out the reaction L-glutamyl-tRNA(Gln) + L-glutamine + ATP + H2O = L-glutaminyl-tRNA(Gln) + L-glutamate + ADP + phosphate + H(+). The catalysed reaction is L-aspartyl-tRNA(Asn) + L-glutamine + ATP + H2O = L-asparaginyl-tRNA(Asn) + L-glutamate + ADP + phosphate + 2 H(+). Its function is as follows. Allows the formation of correctly charged Asn-tRNA(Asn) or Gln-tRNA(Gln) through the transamidation of misacylated Asp-tRNA(Asn) or Glu-tRNA(Gln) in organisms which lack either or both of asparaginyl-tRNA or glutaminyl-tRNA synthetases. The reaction takes place in the presence of glutamine and ATP through an activated phospho-Asp-tRNA(Asn) or phospho-Glu-tRNA(Gln). The sequence is that of Aspartyl/glutamyl-tRNA(Asn/Gln) amidotransferase subunit C from Deinococcus deserti (strain DSM 17065 / CIP 109153 / LMG 22923 / VCD115).